The chain runs to 256 residues: Hydroxyacylglutathione hydrolase (256 aa).

Residues His57, His59, Asp61, His62, His115, Asp134, and His172 each contribute to the Zn(2+) site.

Belongs to the metallo-beta-lactamase superfamily. Glyoxalase II family. As to quaternary structure, monomer. It depends on Zn(2+) as a cofactor.

It carries out the reaction an S-(2-hydroxyacyl)glutathione + H2O = a 2-hydroxy carboxylate + glutathione + H(+). The protein operates within secondary metabolite metabolism; methylglyoxal degradation; (R)-lactate from methylglyoxal: step 2/2. Its function is as follows. Thiolesterase that catalyzes the hydrolysis of S-D-lactoyl-glutathione to form glutathione and D-lactic acid. The chain is Hydroxyacylglutathione hydrolase from Maricaulis maris (strain MCS10) (Caulobacter maris).